A 373-amino-acid chain; its full sequence is Peptide chain release factor 2 (373 aa).

Q251 carries the N5-methylglutamine modification.

Belongs to the prokaryotic/mitochondrial release factor family. In terms of processing, methylated by PrmC. Methylation increases the termination efficiency of RF2.

Its subcellular location is the cytoplasm. In terms of biological role, peptide chain release factor 2 directs the termination of translation in response to the peptide chain termination codons UGA and UAA. The chain is Peptide chain release factor 2 from Salinispora arenicola (strain CNS-205).